Consider the following 111-residue polypeptide: uncharacterized protein (111 aa).

Belongs to the SUI1 family.

This is an uncharacterized protein from Synechocystis sp. (strain ATCC 27184 / PCC 6803 / Kazusa).